The following is a 394-amino-acid chain: Cobalt-precorrin-5B C(1)-methyltransferase (394 aa).

The protein belongs to the CbiD family.

The catalysed reaction is Co-precorrin-5B + S-adenosyl-L-methionine = Co-precorrin-6A + S-adenosyl-L-homocysteine. It participates in cofactor biosynthesis; adenosylcobalamin biosynthesis; cob(II)yrinate a,c-diamide from sirohydrochlorin (anaerobic route): step 6/10. In terms of biological role, catalyzes the methylation of C-1 in cobalt-precorrin-5B to form cobalt-precorrin-6A. The sequence is that of Cobalt-precorrin-5B C(1)-methyltransferase from Clostridium beijerinckii (strain ATCC 51743 / NCIMB 8052) (Clostridium acetobutylicum).